The chain runs to 852 residues: Bifunctional uridylyltransferase/uridylyl-removing enzyme (852 aa).

The segment at 1–318 (MPENLSSALE…STPVRVTLRI (318 aa)) is uridylyltransferase. Residues 319-672 (DDDYIQVNNQ…SRILPQSDSF (354 aa)) form a uridylyl-removing region. Positions 436 to 558 (VDDHILAVVR…VQTHERLSAL (123 aa)) constitute an HD domain. ACT domains are found at residues 673–757 (QVMV…SCNR) and 785–852 (SVEI…EQLA).

Belongs to the GlnD family. Mg(2+) serves as cofactor.

It catalyses the reaction [protein-PII]-L-tyrosine + UTP = [protein-PII]-uridylyl-L-tyrosine + diphosphate. The enzyme catalyses [protein-PII]-uridylyl-L-tyrosine + H2O = [protein-PII]-L-tyrosine + UMP + H(+). With respect to regulation, uridylyltransferase (UTase) activity is inhibited by glutamine, while glutamine activates uridylyl-removing (UR) activity. Modifies, by uridylylation and deuridylylation, the PII regulatory proteins (GlnB and homologs), in response to the nitrogen status of the cell that GlnD senses through the glutamine level. Under low glutamine levels, catalyzes the conversion of the PII proteins and UTP to PII-UMP and PPi, while under higher glutamine levels, GlnD hydrolyzes PII-UMP to PII and UMP (deuridylylation). Thus, controls uridylylation state and activity of the PII proteins, and plays an important role in the regulation of nitrogen assimilation and metabolism. This Neisseria gonorrhoeae (strain ATCC 700825 / FA 1090) protein is Bifunctional uridylyltransferase/uridylyl-removing enzyme.